Reading from the N-terminus, the 342-residue chain is MTLLLAGDIGGTKTILRLVEISNSSELHNIYEESYQSGDFPDLVPMVQQFLVKANIPSHPEKACFAIAGPVVNNTAKLTNLVWFLDTERLAQELSIPFISLINDFAAVGYGIFGLNKQDLLTLQAGKHQPEAPIAIIGAGTGLGQGFLIKQGNQYQVFPSEGGHADFAPRNELEFQLLKYLLDKHDIQRVSVERVVSGQGIVAIYQFLRDRKLATESPEIAQVVRTWEQQAGQAEKTVDPGAAIGKAAVQGSDRLSEQALQLFIDAYGAEAGNLALKLLPYGGLYIAGGIAPKILPLIENSNFLLNFSQKGRMRPLLAEIPVHIILNQQVGLIGAALCAARL.

Residue 7 to 12 (GDIGGT) coordinates ATP.

Belongs to the bacterial glucokinase family.

It localises to the cytoplasm. The enzyme catalyses D-glucose + ATP = D-glucose 6-phosphate + ADP + H(+). The polypeptide is Glucokinase (Nostoc sp. (strain PCC 7120 / SAG 25.82 / UTEX 2576)).